Consider the following 358-residue polypeptide: Thiol protease aleurain-like (358 aa).

The signal sequence occupies residues 1–21; that stretch reads MSVKLNLSSSILLILFAAAAS. Positions 22–140 are cleaved as a propeptide — activation peptide; that stretch reads KEIGFDESNP…KGSHKITEAT (119 aa). A glycan (N-linked (GlcNAc...) asparagine) is linked at Asn125. Disulfide bonds link Cys162/Cys205 and Cys196/Cys238. The active site involves Cys165. Asn254 carries N-linked (GlcNAc...) asparagine glycosylation. Residues Cys296 and Cys346 are joined by a disulfide bond. Residues His305 and Asn325 contribute to the active site.

The protein belongs to the peptidase C1 family.

It localises to the vacuole. It catalyses the reaction Hydrolysis of proteins, acting as an aminopeptidase (notably, cleaving Arg-|-Xaa bonds) as well as an endopeptidase.. In terms of biological role, may play a role in proteolysis leading to mobilization of nitrogen during senescence and starvation. This is Thiol protease aleurain-like from Arabidopsis thaliana (Mouse-ear cress).